The chain runs to 298 residues: 4-diphosphocytidyl-2-C-methyl-D-erythritol kinase (298 aa).

The active site involves lysine 11. 94–104 provides a ligand contact to ATP; that stretch reads PMGGGLGGGSS. Aspartate 136 is a catalytic residue.

The protein belongs to the GHMP kinase family. IspE subfamily.

It carries out the reaction 4-CDP-2-C-methyl-D-erythritol + ATP = 4-CDP-2-C-methyl-D-erythritol 2-phosphate + ADP + H(+). It participates in isoprenoid biosynthesis; isopentenyl diphosphate biosynthesis via DXP pathway; isopentenyl diphosphate from 1-deoxy-D-xylulose 5-phosphate: step 3/6. Its function is as follows. Catalyzes the phosphorylation of the position 2 hydroxy group of 4-diphosphocytidyl-2C-methyl-D-erythritol. The sequence is that of 4-diphosphocytidyl-2-C-methyl-D-erythritol kinase from Chromohalobacter salexigens (strain ATCC BAA-138 / DSM 3043 / CIP 106854 / NCIMB 13768 / 1H11).